The following is a 299-amino-acid chain: Oxygen-dependent coproporphyrinogen-III oxidase (299 aa).

S92 lines the substrate pocket. Mn(2+) is bound by residues H96 and H106. H106 (proton donor) is an active-site residue. 108 to 110 (NVR) is a substrate binding site. Mn(2+) is bound by residues H145 and H175. The segment at 240–275 (YVEFNLVWDRGTLFGLQTGGRTESILMSMPPLVRWE) is important for dimerization. 258–260 (GGR) provides a ligand contact to substrate.

Belongs to the aerobic coproporphyrinogen-III oxidase family. As to quaternary structure, homodimer. It depends on Mn(2+) as a cofactor.

The protein localises to the cytoplasm. The catalysed reaction is coproporphyrinogen III + O2 + 2 H(+) = protoporphyrinogen IX + 2 CO2 + 2 H2O. The protein operates within porphyrin-containing compound metabolism; protoporphyrin-IX biosynthesis; protoporphyrinogen-IX from coproporphyrinogen-III (O2 route): step 1/1. Its function is as follows. Involved in the heme biosynthesis. Catalyzes the aerobic oxidative decarboxylation of propionate groups of rings A and B of coproporphyrinogen-III to yield the vinyl groups in protoporphyrinogen-IX. This is Oxygen-dependent coproporphyrinogen-III oxidase from Escherichia coli O7:K1 (strain IAI39 / ExPEC).